Reading from the N-terminus, the 461-residue chain is F-box protein At3g62230 (461 aa).

One can recognise an F-box domain in the interval 7-55 (VDIISTLSDFLLVLIISNLSFKEALSTSRLSTRWRHICRETRNISFRED).

As to quaternary structure, part of a SCF (ASK-cullin-F-box) protein ligase complex. Interacts with ASK4.

It is found in the nucleus. The protein operates within protein modification; protein ubiquitination. In terms of biological role, component of SCF(ASK-cullin-F-box) E3 ubiquitin ligase complexes, which may mediate the ubiquitination and subsequent proteasomal degradation of target proteins. This chain is F-box protein At3g62230, found in Arabidopsis thaliana (Mouse-ear cress).